A 222-amino-acid polypeptide reads, in one-letter code: Ras-related protein RABA4d (222 aa).

22–29 (GDSAVGKT) is a binding site for GTP. The Effector region motif lies at 44-52 (SKATIGVEF). Residues 70–74 (DTAGQ), 128–131 (NKCD), and 158–159 (SA) each bind GTP. Residues Cys-218 and Cys-219 are each lipidated (S-geranylgeranyl cysteine).

This sequence belongs to the small GTPase superfamily. Rab family. As to quaternary structure, interacts with PI4KB1. Specifically expressed in pollen and localized to the tips of growing pollen tubes.

It is found in the cytoplasmic vesicle membrane. Its function is as follows. Intracellular vesicle trafficking and protein transport. Plays an important role in the regulation of pollen tube tip growth. This is Ras-related protein RABA4d (RABA4D) from Arabidopsis thaliana (Mouse-ear cress).